The chain runs to 120 residues: Large ribosomal subunit protein bL12 (120 aa).

Belongs to the bacterial ribosomal protein bL12 family. In terms of assembly, homodimer. Part of the ribosomal stalk of the 50S ribosomal subunit. Forms a multimeric L10(L12)X complex, where L10 forms an elongated spine to which 2 to 4 L12 dimers bind in a sequential fashion. Binds GTP-bound translation factors.

In terms of biological role, forms part of the ribosomal stalk which helps the ribosome interact with GTP-bound translation factors. Is thus essential for accurate translation. This Listeria monocytogenes serovar 1/2a (strain ATCC BAA-679 / EGD-e) protein is Large ribosomal subunit protein bL12.